The chain runs to 431 residues: Putative F-box/FBD/LRR-repeat protein At4g26350 (431 aa).

The F-box domain maps to Met1–Asp47. LRR repeat units lie at residues Asn52–Asn78, Cys85–Ile109, Ile132–Cys159, Ile160–Arg185, and Cys309–Asn334. The FBD domain occupies Cys348–Ser398.

The chain is Putative F-box/FBD/LRR-repeat protein At4g26350 from Arabidopsis thaliana (Mouse-ear cress).